The following is a 183-amino-acid chain: Glutathione-regulated potassium-efflux system ancillary protein KefG (183 aa).

The protein belongs to the NAD(P)H dehydrogenase (quinone) family. KefG subfamily. As to quaternary structure, interacts with KefB.

Its subcellular location is the cell inner membrane. The catalysed reaction is a quinone + NADH + H(+) = a quinol + NAD(+). The enzyme catalyses a quinone + NADPH + H(+) = a quinol + NADP(+). Regulatory subunit of a potassium efflux system that confers protection against electrophiles. Required for full activity of KefB. This is Glutathione-regulated potassium-efflux system ancillary protein KefG from Salmonella paratyphi C (strain RKS4594).